The primary structure comprises 60 residues: 5-hydroxytryptamine receptor 2B (60 aa).

Topologically, residues 1 to 4 are extracellular; that stretch reads VLCP. The helical transmembrane segment at 5 to 26 threads the bilayer; the sequence is AWLFLDVLFSTASIMHLCAISV. 2 residues coordinate ergotamine: Asp-10 and Thr-15. Positions 27–29 match the DRY motif; important for ligand-induced conformation changes motif; sequence DRY. At 27-46 the chain is on the cytoplasmic side; the sequence is DRYIAIKKPIQANQYNSRAT. Residues 47–60 traverse the membrane as a helical segment; that stretch reads AFIKITVVWLISIG.

This sequence belongs to the G-protein coupled receptor 1 family. As to quaternary structure, interacts (via C-terminus) with MPDZ. As to expression, detected in aorta, renal artery, jugular vein, vena cava and femoral vein.

It is found in the cell membrane. Its subcellular location is the synapse. It localises to the synaptosome. In terms of biological role, G-protein coupled receptor for 5-hydroxytryptamine (serotonin). Also functions as a receptor for various ergot alkaloid derivatives and psychoactive substances. Ligand binding causes a conformation change that triggers signaling via guanine nucleotide-binding proteins (G proteins) and modulates the activity of downstream effectors. HTR2B is coupled to G(q)/G(11) G alpha proteins and activates phospholipase C-beta, releasing diacylglycerol (DAG) and inositol 1,4,5-trisphosphate (IP3) second messengers that modulate the activity of phosphatidylinositol 3-kinase and promote the release of Ca(2+) ions from intracellular stores, respectively. Beta-arrestin family members inhibit signaling via G proteins and mediate activation of alternative signaling pathways. Plays a role in the regulation of dopamine and 5-hydroxytryptamine release, 5-hydroxytryptamine uptake and in the regulation of extracellular dopamine and 5-hydroxytryptamine levels, and thereby affects neural activity. May play a role in the perception of pain. Plays a role in the regulation of behavior, including impulsive behavior. Required for normal proliferation of embryonic cardiac myocytes and normal heart development. Protects cardiomyocytes against apoptosis. Plays a role in the adaptation of pulmonary arteries to chronic hypoxia. Plays a role in vasoconstriction. Required for normal osteoblast function and proliferation, and for maintaining normal bone density. Required for normal proliferation of the interstitial cells of Cajal in the intestine. In Sus scrofa (Pig), this protein is 5-hydroxytryptamine receptor 2B (HTR2B).